The following is a 409-amino-acid chain: 2,3-bisphosphoglycerate-independent phosphoglycerate mutase (409 aa).

The disordered stretch occupies residues 160-179 (ITDADPKHEGNKPKTVKPLD).

The protein belongs to the BPG-independent phosphoglycerate mutase family. A-PGAM subfamily.

It catalyses the reaction (2R)-2-phosphoglycerate = (2R)-3-phosphoglycerate. The protein operates within carbohydrate degradation; glycolysis; pyruvate from D-glyceraldehyde 3-phosphate: step 3/5. Functionally, catalyzes the interconversion of 2-phosphoglycerate and 3-phosphoglycerate. The protein is 2,3-bisphosphoglycerate-independent phosphoglycerate mutase of Methanosphaera stadtmanae (strain ATCC 43021 / DSM 3091 / JCM 11832 / MCB-3).